Here is a 291-residue protein sequence, read N- to C-terminus: Probable cell wall amidase LytH (291 aa).

A signal peptide spans 1–40 (MKKIDSWLTKHGLKNRLTLVVIVIFIIFLILLFMFVNLSD). The SH3b domain maps to 41 to 105 (EDTGQITITE…WVAGWHTNLN (65 aa)). Positions 122–286 (IVLDPGHGGS…VEQAIVDGLK (165 aa)) constitute a MurNAc-LAA domain. Residues 123–147 (VLDPGHGGSDQGASSSTPSKSLEKN) form a disordered region. Residues 133–142 (QGASSSTPSK) are compositionally biased toward polar residues.

This sequence belongs to the N-acetylmuramoyl-L-alanine amidase 3 family.

It localises to the secreted. In terms of biological role, probably involved in cell-wall metabolism. The sequence is that of Probable cell wall amidase LytH (lytH) from Staphylococcus epidermidis (strain ATCC 35984 / DSM 28319 / BCRC 17069 / CCUG 31568 / BM 3577 / RP62A).